The following is a 268-amino-acid chain: GTP cyclohydrolase FolE2 (268 aa).

Belongs to the GTP cyclohydrolase IV family.

It catalyses the reaction GTP + H2O = 7,8-dihydroneopterin 3'-triphosphate + formate + H(+). The protein operates within cofactor biosynthesis; 7,8-dihydroneopterin triphosphate biosynthesis; 7,8-dihydroneopterin triphosphate from GTP: step 1/1. Converts GTP to 7,8-dihydroneopterin triphosphate. This is GTP cyclohydrolase FolE2 from Methylococcus capsulatus (strain ATCC 33009 / NCIMB 11132 / Bath).